The primary structure comprises 24 residues: Brevinin-1Pe (24 aa).

A disulfide bridge links cysteine 18 with cysteine 24.

In terms of tissue distribution, expressed by the skin glands.

The protein localises to the secreted. Functionally, antibacterial activity against Gram-positive bacterium S.aureus and Gram-negative bacterium E.coli. Has activity against C.albicans. The polypeptide is Brevinin-1Pe (Lithobates pipiens (Northern leopard frog)).